The chain runs to 238 residues: 7-carboxy-7-deazaguanine synthase (238 aa).

Substrate contacts are provided by residues I14–G16 and R29. In terms of domain architecture, Radical SAM core spans V20 to N234. Residues C33, C37, and C40 each contribute to the [4Fe-4S] cluster site. S42 contributes to the Mg(2+) binding site. S80 contacts substrate. S-adenosyl-L-methionine-binding positions include G82 and S126–K128.

This sequence belongs to the radical SAM superfamily. 7-carboxy-7-deazaguanine synthase family. As to quaternary structure, homodimer. The cofactor is [4Fe-4S] cluster. It depends on S-adenosyl-L-methionine as a cofactor. Mg(2+) serves as cofactor.

It catalyses the reaction 6-carboxy-5,6,7,8-tetrahydropterin + H(+) = 7-carboxy-7-deazaguanine + NH4(+). It functions in the pathway purine metabolism; 7-cyano-7-deazaguanine biosynthesis. In terms of biological role, catalyzes the complex heterocyclic radical-mediated conversion of 6-carboxy-5,6,7,8-tetrahydropterin (CPH4) to 7-carboxy-7-deazaguanine (CDG), a step common to the biosynthetic pathways of all 7-deazapurine-containing compounds. The protein is 7-carboxy-7-deazaguanine synthase of Bacillus cereus (strain ATCC 14579 / DSM 31 / CCUG 7414 / JCM 2152 / NBRC 15305 / NCIMB 9373 / NCTC 2599 / NRRL B-3711).